A 731-amino-acid chain; its full sequence is Replication restart protein PriA (731 aa).

A 3'BD region spans residues 1–98 (MSVAHVALPV…HPIGDVLFHA (98 aa)). The interval 115–177 (WYWFATEQGQ…RGKGLAELAC (63 aa)) is WH. The interval 200–375 (TEQATAVGAI…VRQGKYRQLT (176 aa)) is helicase lobe 1. The Helicase ATP-binding domain maps to 210–376 (HSAADRFSAW…RQGKYRQLTL (167 aa)). Residue 223-230 (GITGSGKT) participates in ATP binding. Residues glycine 226, glycine 228, lysine 229, threonine 230, glutamate 231, and arginine 263 each contribute to the ADP site. Residues 319 to 322 (DEEH) carry the DEAH box motif. The short motif at 326-340 (YKQQEGWRYHARDLA) is the Aromatic-rich loop (ARL) element. The helicase lobe 2, N-terminus stretch occupies residues 387–430 (QQHVLDLKGQPLQAGLSPALISRMRQHLQADNQVILFLNRRGFA). Residues 431–485 (PALLCHDCGWIAECPRCDSYYTLHQAQHHLRCHHCDSQRPIPRQCPSCGSTHLVP) form a CRR region. Zn(2+) contacts are provided by cysteine 435, cysteine 438, cysteine 444, cysteine 447, cysteine 462, cysteine 465, cysteine 475, and cysteine 478. In terms of domain architecture, Helicase C-terminal spans 470-637 (PIPRQCPSCG…QLPPWTSHVL (168 aa)). The tract at residues 486-626 (VGIGTEQLEQ…AEQALAERQT (141 aa)) is helicase lobe 2, C-terminus. Lysine 543 provides a ligand contact to ADP. The interval 633-731 (TSHVLIRAED…WVLDVDPIEG (99 aa)) is CTD.

This sequence belongs to the helicase family. PriA subfamily. As to quaternary structure, binds SSB. Component of the replication restart primosome. The cofactor is Zn(2+).

The enzyme catalyses Couples ATP hydrolysis with the unwinding of duplex DNA by translocating in the 3'-5' direction.. It catalyses the reaction ATP + H2O = ADP + phosphate + H(+). Its activity is regulated as follows. ATPase activity is stimulated by single-stranded binding protein (SSB). In terms of biological role, initiates the restart of stalled replication forks, which reloads the replicative helicase on sites other than the origin of replication. Recognizes and binds to abandoned replication forks and remodels them to uncover a helicase loading site. Promotes assembly of the primosome at these replication forks. Recognizes abandoned replication forks and remodels SSB on ssDNA to uncover a loading site for DnaB. Binds replication fork DNA, has DNA-dependent ATPase activity in the presence of replication fork DNA, restores normal cell growth and SOS induction to E.coli mutant pirA304. This chain is Replication restart protein PriA, found in Klebsiella pneumoniae subsp. pneumoniae (strain ATCC 700721 / MGH 78578).